Here is a 338-residue protein sequence, read N- to C-terminus: tRNA N6-adenosine threonylcarbamoyltransferase (338 aa).

His114 and His118 together coordinate Fe cation. Substrate contacts are provided by residues 136–140 (LVSGG), Asp169, Gly182, Asp186, and Asn275. Fe cation is bound at residue Asp301.

The protein belongs to the KAE1 / TsaD family. Requires Fe(2+) as cofactor.

Its subcellular location is the cytoplasm. It carries out the reaction L-threonylcarbamoyladenylate + adenosine(37) in tRNA = N(6)-L-threonylcarbamoyladenosine(37) in tRNA + AMP + H(+). In terms of biological role, required for the formation of a threonylcarbamoyl group on adenosine at position 37 (t(6)A37) in tRNAs that read codons beginning with adenine. Is involved in the transfer of the threonylcarbamoyl moiety of threonylcarbamoyl-AMP (TC-AMP) to the N6 group of A37, together with TsaE and TsaB. TsaD likely plays a direct catalytic role in this reaction. This Streptococcus equi subsp. zooepidemicus (strain MGCS10565) protein is tRNA N6-adenosine threonylcarbamoyltransferase.